The primary structure comprises 1336 residues: MPSVSESDELIFFVNGKKVIEKNPDPEKNLLFYTRKVLNLTGTKYSCGTGGCGACTVMVSRYNPKTRKIHHYPATACLVPICWLHGAAITTVEGVGSIKKRVHPVQERLAKCHGTQCGFCSPGMVMSIYTLLRNHPEPTPDQITEALGGNLCRCTGYRPIVESGKTFSQKSTVCQMKGSGKCCMDPDEKCLESREKKMCTKLYNEDEFQPFDPSQEPIFPPELIRMAEDPNKRRLTFQGKRTTWIIPVTLNDLLELKASYPEAPLVMGNTTVGPGIKFNDEFYPVFISPLGVPELNLMDTTNNGVTIGAGYSLAQLKDTLDFLVSEQPKEKTKTFHALQKHLRTLAGPQIRNMATLGGHTASRPNFSDLNPILAAGNATINVVSREGKDRQLPLNGPFLEKLPEADLKPEEVILSIFIPYTAQWQFVSGLRLAQRQENAFAIVNAGMSVEFEEGTNTIKDLKMFFGSVAPTVVSASQTCKQLIGRQWDDQMLSDACQLVLQEIRIPPDAEGGMVEYRRTLIISLLFKFYLKVQRWLNEMDPQKFPDIPGKFVSALDDFPIETPQGIQMFQCVDPKQPQKDPVGHPIMHQSGIKHATGEAIFIDDMPPIDQELCLAVVTSTRAHAKITSLDVSEALACPGVVDVITAEDVPGENDHNGEILYAQSEVICVGQIICTVAADTYIHAKEAAKRVKIAYDDIEPTIITIEEALEHNSFLSPEKKIEQGNVDYAFKHVDQIVEGEIHVEGQEHFYMETQTILAIPQTEDKEMVLHLGTQFPTHVQEFVSAALNVPRSRIACHMKRAGGAFGGKVTKPALLGAVCAVAANKTGRPIRFILERSDDMLITAGRHPLLGKYKIGFMNNGEIRAADVEYYTNGGCTPDESELVIEFVVLKSENTYHIPNFRCRGRACKTNLPSNTAFRGFGFPQATVVVEAYIAAVASKCNLLPEEVREINMYKKTSKTAYKQTFNPEPLRRCWKECLEKSSFFARKKAAEEFNGNNYWKKRGLAVVPMKFSVAVPIAFYNQAAALVHIFLDGSVLLTHGGCELGQGLHTKMIQVASRELNVPKSYVHFSETSTTTVPNSAFTAGSMGADINGKAVQNACQILMDRLRPIIRKNPKGKWEEWIKMAFEESISLSATGYFKGYQTNMDWKKEEGDPYPYYVYGAACSEVEVDCLTGAHKLLRTDIFVDAAFSINPALDIGQVEGAFIQGMGFYTTEELKYSPKGVLYSRGPEDYKIPTITEIPEEFYVTLVHSRNPIAIYSSKGLGEAGMFLGSSVLFAIYDAVTTARKERGLSDIFPLNSPATPEVIRMACTDQFTEMIPRDDPSTFTPWSIHVS.

The region spanning 8 to 95 is the 2Fe-2S ferredoxin-type domain; that stretch reads DELIFFVNGK…GAAITTVEGV (88 aa). Residues cysteine 47, cysteine 52, cysteine 55, and cysteine 77 each coordinate [2Fe-2S] cluster. Glutamine 116 is a Mo-molybdopterin binding site. [2Fe-2S] cluster-binding residues include cysteine 117, cysteine 120, cysteine 152, and cysteine 154. Mo-molybdopterin is bound at residue cysteine 154. The 187-residue stretch at 237-423 folds into the FAD-binding PCMH-type domain; the sequence is FQGKRTTWII…LSIFIPYTAQ (187 aa). FAD-binding positions include 265–272, alanine 346, threonine 355, histidine 359, aspartate 368, and isoleucine 413; that span reads LVMGNTTV. Residues 804 to 805, leucine 1045, 1086 to 1089, glutamine 1201, and leucine 1265 each bind Mo-molybdopterin; these read AF and GSMG. The active-site Proton acceptor; for azaheterocycle hydroxylase activity is the glutamate 1267.

The protein belongs to the xanthine dehydrogenase family. As to quaternary structure, homodimer. It depends on [2Fe-2S] cluster as a cofactor. The cofactor is FAD. Mo-molybdopterin serves as cofactor. Highly expressed in Harderian glands and sebaceous glands with detectable levels in the epidermis and other keratinized epithelia (at protein level). Detected in testis. The expression is 3 times greater in females than in males.

It localises to the cytoplasm. It catalyses the reaction an aldehyde + O2 + H2O = a carboxylate + H2O2 + H(+). The catalysed reaction is retinal + O2 + H2O = retinoate + H2O2 + H(+). It carries out the reaction all-trans-retinal + O2 + H2O = all-trans-retinoate + H2O2 + H(+). Its function is as follows. Aldehyde oxidase able to catalyze the oxidation of retinaldehyde into retinoate. Is responsible for the major all-trans-retinaldehyde-metabolizing activity in the Harderian gland, and contributes a significant amount of the same activity in the skin. Is devoid of pyridoxal-oxidizing activity, in contrast to the other aldehyde oxidases. Acts as a negative modulator of the epidermal trophism. May be able to oxidize a wide variety of aldehydes into their corresponding carboxylates and to hydroxylate azaheterocycles. The sequence is that of Aldehyde oxidase 4 (Aox4) from Mus musculus (Mouse).